The sequence spans 350 residues: Probable dTDP-glucose 4,6-dehydratase (350 aa).

Position 7–13 (7–13) interacts with NAD(+); the sequence is GGAGFIG. Threonine 132 is a binding site for substrate. Aspartate 133 (proton donor) is an active-site residue. Catalysis depends on proton acceptor residues glutamate 134 and tyrosine 157.

Belongs to the NAD(P)-dependent epimerase/dehydratase family. dTDP-glucose dehydratase subfamily. NAD(+) serves as cofactor.

It catalyses the reaction dTDP-alpha-D-glucose = dTDP-4-dehydro-6-deoxy-alpha-D-glucose + H2O. Its pathway is carbohydrate biosynthesis; dTDP-L-rhamnose biosynthesis. This Sinorhizobium fredii (strain NBRC 101917 / NGR234) protein is Probable dTDP-glucose 4,6-dehydratase.